Consider the following 1222-residue polypeptide: BOS complex subunit NOMO1 (1222 aa).

The signal sequence occupies residues 1 to 31; the sequence is MLVGQGAGPLGPAVVTAAVVLLLSGVGPAHG. The Extracellular portion of the chain corresponds to 32–1155; it reads SEDIVVGCGG…NPTRKLPEQD (1124 aa). Residues N50, N218, and N618 are each glycosylated (N-linked (GlcNAc...) asparagine). Residues 1156 to 1176 form a helical membrane-spanning segment; sequence IAQGSYIALPLTLLVLLAGYN. Over 1177-1222 the chain is Cytoplasmic; the sequence is HDKLIPLLLQLTSRLQGVRALGQAASDNSGPEDAKRQAKKQKTRRT. The disordered stretch occupies residues 1198 to 1222; it reads GQAASDNSGPEDAKRQAKKQKTRRT. A Phosphoserine modification is found at S1205. Positions 1213 to 1222 are enriched in basic residues; that stretch reads QAKKQKTRRT.

Component of the back of Sec61 (BOS) complex, composed of NCLN/Nicalin, NOMO (NOMO1, NOMO2 or NOMO3) and TMEM147. The BOS complex is part of the multi-pass translocon (MPT) complex, composed of three subcomplexes, the GEL complex (composed of RAB5IF/OPTI and TMCO1), the BOS complex (composed of NCLN/Nicalin, NOMO and TMEM147) and the PAT complex (composed of WDR83OS/Asterix and CCDC47). The MPT complex associates with the SEC61 complex. Due to the strong similarity between NOMO1, NOMO2 and NOMO3, similar interaction pattern probably occur for the three gene copies. As to expression, expressed in colon tumor tissue and in adjacent normal colonic mucosa.

It is found in the endoplasmic reticulum membrane. Functionally, component of the multi-pass translocon (MPT) complex that mediates insertion of multi-pass membrane proteins into the lipid bilayer of membranes. The MPT complex takes over after the SEC61 complex: following membrane insertion of the first few transmembrane segments of proteins by the SEC61 complex, the MPT complex occludes the lateral gate of the SEC61 complex to promote insertion of subsequent transmembrane regions. The sequence is that of BOS complex subunit NOMO1 (NOMO1) from Homo sapiens (Human).